The primary structure comprises 5146 residues: SCO-spondin (5146 aa).

A signal peptide spans 1–17; it reads MLLPALLFGAAWALANG. Residues 18–94 form the EMI domain; it reads RWCEQTETVL…ACCPGWGGTH (77 aa). N-linked (GlcNAc...) asparagine glycans are attached at residues asparagine 80, asparagine 122, and asparagine 153. Residues 185-356 form the VWFD 1 domain; the sequence is ATCATWSGFH…RLPDSELGCL (172 aa). 3 disulfides stabilise this stretch: cysteine 187-cysteine 317, cysteine 209-cysteine 355, and cysteine 231-cysteine 237. Asparagine 255 carries N-linked (GlcNAc...) asparagine glycosylation. In terms of domain architecture, TIL 1 spans 464–519; sequence CPGGQLYSDCASACPPSCSAVGEGSEWSCGEECVSGCECPPGLFWDGALCVPAARC. One can recognise a VWFD 2 domain in the interval 557-730; the sequence is AECAVGGDGH…FQVAGGGTCS (174 aa). Cystine bridges form between cysteine 559–cysteine 692 and cysteine 583–cysteine 729. Asparagine 814 carries N-linked (GlcNAc...) asparagine glycosylation. A TIL 2 domain is found at 822–875; the sequence is CPGGQEYQECAPACDRNCGEPEDCGELDNCVAGCNCPLGLLWDPEGQCVPPNLC. The N-linked (GlcNAc...) asparagine glycan is linked to asparagine 906. The region spanning 1008–1178 is the VWFD 3 domain; that stretch reads GRCRASGAPH…HSWRLGPLCP (171 aa). Intrachain disulfides connect cysteine 1010-cysteine 1142, cysteine 1032-cysteine 1177, and cysteine 1053-cysteine 1060. One can recognise a TIL 3 domain in the interval 1271–1327; the sequence is CERGQVYEACGPTCPATCHDHRPEPGWPCRAVACVEGCFCPEGTLLHGGVCLEPAAC. The N-linked (GlcNAc...) asparagine glycan is linked to asparagine 1349. 6 consecutive LDL-receptor class A domains span residues 1372–1409, 1412–1447, 1448–1484, 1488–1526, 1561–1597, and 1599–1638; these read GCAE…EGCA, VCGE…EQGC, PCPQ…ESCL, DCAP…GHCP, PCGP…SGCD, and PCAP…GACE. Intrachain disulfides connect cysteine 1373/cysteine 1386, cysteine 1380/cysteine 1399, cysteine 1393/cysteine 1408, cysteine 1413/cysteine 1425, cysteine 1420/cysteine 1438, cysteine 1432/cysteine 1447, cysteine 1449/cysteine 1461, cysteine 1456/cysteine 1474, cysteine 1468/cysteine 1483, cysteine 1489/cysteine 1501, cysteine 1496/cysteine 1514, cysteine 1508/cysteine 1525, cysteine 1562/cysteine 1574, cysteine 1569/cysteine 1587, cysteine 1581/cysteine 1596, cysteine 1600/cysteine 1613, cysteine 1607/cysteine 1626, and cysteine 1620/cysteine 1637. Asparagine 1647 carries an N-linked (GlcNAc...) asparagine glycan. In terms of domain architecture, LDL-receptor class A 7 spans 1652–1690; it reads PCPEYSCPDGLCIGFQQVCDGQPDCELAGTAGPSPEEQG. TSP type-1 domains lie at 1691 to 1745 and 1747 to 1805; these read CGAW…AACP and DGVW…DGCP. Disulfide bonds link cysteine 1703–cysteine 1739, cysteine 1707–cysteine 1744, and cysteine 1718–cysteine 1729. An N-linked (GlcNAc...) asparagine glycan is attached at asparagine 1806. In terms of domain architecture, TIL 4 spans 1809–1865; it reads CSGELVFHACVPCPLTCDDISGQATCPPDRPCGGPGCWCPAGQVLGAQGRCVWPRQC. 2 consecutive EGF-like domains span residues 1821–1860 and 1861–1898; these read CPLT…GRCV and WPRQ…RRCQ. Residues 1906 to 1962 form the TSP type-1 3 domain; the sequence is NCGWSAWSPWAECLGPCGSRSVQWSFRSPNNPRPAGRGHQCRGLHRKARRCQTEPCE. Intrachain disulfides connect cysteine 1907–cysteine 1946, cysteine 1918–cysteine 1922, and cysteine 1956–cysteine 1961. A VWFC 1 domain is found at 1962-2022; that stretch reads EGCEQDGRVH…GVGESCCHCV (61 aa). Residues asparagine 2027 and asparagine 2127 are each glycosylated (N-linked (GlcNAc...) asparagine). 4 cysteine pairs are disulfide-bonded: cysteine 2062–cysteine 2220, cysteine 2226–cysteine 2238, cysteine 2233–cysteine 2251, and cysteine 2245–cysteine 2260. The 159-residue stretch at 2062–2220 folds into the F5/8 type C domain; the sequence is CYSPLGLARL…GPLRVELLGC (159 aa). The 37-residue stretch at 2225-2261 folds into the LDL-receptor class A 8 domain; sequence LCLGVGHRCVSGECAPRGAPCDGVEDCKDGSDEEGCV. The segment at 2262–2346 is disordered; it reads TPPAGAGRIE…TPTSQPEAQA (85 aa). 2 stretches are compositionally biased toward polar residues: residues 2273 to 2284 and 2331 to 2343; these read TAWSSAPSSAQP and GSVQ…SQPE. LDL-receptor class A domains lie at 2382 to 2418 and 2442 to 2478; these read QCSP…RPCA and LCSP…NGCV. 12 disulfides stabilise this stretch: cysteine 2383-cysteine 2395, cysteine 2390-cysteine 2408, cysteine 2402-cysteine 2417, cysteine 2443-cysteine 2455, cysteine 2450-cysteine 2468, cysteine 2462-cysteine 2477, cysteine 2480-cysteine 2516, cysteine 2491-cysteine 2495, cysteine 2526-cysteine 2531, cysteine 2546-cysteine 2583, cysteine 2550-cysteine 2588, and cysteine 2561-cysteine 2573. TSP type-1 domains lie at 2479-2532 and 2534-2589; these read DCGL…QACP and AGAW…QPCA. One can recognise a TIL 5 domain in the interval 2611–2654; the sequence is VPPCPPSCLDPEANRSCSGLCLEGCRCPPGLLLQDAGCLPLSEC. N-linked (GlcNAc...) asparagine glycosylation is found at asparagine 2624 and asparagine 2673. TSP type-1 domains are found at residues 2694–2748, 2751–2807, and 2809–2862; these read PCGW…SACG, VPGW…PVCL, and LGVW…QPCT. Cystine bridges form between cysteine 2695–cysteine 2733, cysteine 2706–cysteine 2710, cysteine 2743–cysteine 2747, cysteine 2763–cysteine 2801, cysteine 2767–cysteine 2806, cysteine 2783–cysteine 2791, cysteine 2821–cysteine 2856, cysteine 2825–cysteine 2861, and cysteine 2836–cysteine 2846. Asparagine 2915 and asparagine 2946 each carry an N-linked (GlcNAc...) asparagine glycan. TSP type-1 domains follow at residues 2964–3019 and 3020–3071; these read ACGW…RPCG and GPAG…GVCP. Cystine bridges form between cysteine 2965/cysteine 3003, cysteine 2976/cysteine 2980, and cysteine 3013/cysteine 3018. Asparagine 3041 carries an N-linked (GlcNAc...) asparagine glycan. Residues 3070-3122 form the TIL 6 domain; it reads CPPGKRWLDCAQGPASCAELSAPRGADQPCHPGCYCPSGMLLLNNACVPTQDC. Asparagine 3143 and asparagine 3153 each carry an N-linked (GlcNAc...) asparagine glycan. 2 consecutive TSP type-1 domains span residues 3163-3230 and 3232-3287; these read QPTW…PECD and AGGW…LPCP. Intrachain disulfides connect cysteine 3175/cysteine 3224, cysteine 3179/cysteine 3229, cysteine 3190/cysteine 3214, cysteine 3244/cysteine 3281, cysteine 3248/cysteine 3286, and cysteine 3259/cysteine 3271. Asparagine 3290 is a glycosylation site (N-linked (GlcNAc...) asparagine). The region spanning 3295–3345 is the TIL 7 domain; that stretch reads EGAEYSACGPPCPRSCDDLVHCVWHCQPGCYCPPGQVLSADGTVHVQPGHC. TSP type-1 domains follow at residues 3388–3450 and 3452–3507; these read PGAW…PECP and DGAW…TQCT. 6 disulfides stabilise this stretch: cysteine 3400-cysteine 3443, cysteine 3404-cysteine 3449, cysteine 3415-cysteine 3427, cysteine 3464-cysteine 3499, cysteine 3467-cysteine 3506, and cysteine 3477-cysteine 3489. Residues asparagine 3502, asparagine 3580, and asparagine 3607 are each glycosylated (N-linked (GlcNAc...) asparagine). Residues 3626–3674 form the TSP type-1 15 domain; it reads LGLWGSWGPWEDCSVSCGGGEQLRFRRCPRPPCPGPARQSRTCRTQVCR. Disulfide bonds link cysteine 3638/cysteine 3668, cysteine 3642/cysteine 3673, and cysteine 3653/cysteine 3658. N-linked (GlcNAc...) asparagine glycosylation occurs at asparagine 3783. 4 TSP type-1 domains span residues 3802 to 3858, 3872 to 3924, 3938 to 3994, and 3996 to 4051; these read AGGF…PECP, PGGW…PSCT, NCSW…RACP, and PGGW…TPCE. 3 disulfides stabilise this stretch: cysteine 3814–cysteine 3852, cysteine 3818–cysteine 3857, and cysteine 3830–cysteine 3842. 2 N-linked (GlcNAc...) asparagine glycosylation sites follow: asparagine 3906 and asparagine 3938. 6 cysteine pairs are disulfide-bonded: cysteine 3939–cysteine 3975, cysteine 3950–cysteine 3954, cysteine 3988–cysteine 3993, cysteine 4008–cysteine 4045, cysteine 4012–cysteine 4050, and cysteine 4023–cysteine 4035. Residues 4054-4109 enclose the TIL 8 domain; the sequence is CPAGMEVVSCANRCPRRCSDLQEGIVCQEDQACQQGCRCPEGSLEQDGGCVPLGHC. Residues 4101 to 4168 enclose the VWFC 2 domain; it reads GGCVPLGHCE…AWSPCSRSCG (68 aa). N-linked (GlcNAc...) asparagine glycosylation occurs at asparagine 4131. 4 consecutive TSP type-1 domains span residues 4151 to 4204, 4245 to 4300, 4302 to 4358, and 4360 to 4414; these read HCAW…SPCP, LGAW…WPCP, LPDT…GPCL, and ECVW…GNCS. 6 disulfides stabilise this stretch: cysteine 4152–cysteine 4188, cysteine 4163–cysteine 4167, cysteine 4198–cysteine 4203, cysteine 4257–cysteine 4294, cysteine 4261–cysteine 4299, and cysteine 4272–cysteine 4284. Asparagine 4341 carries N-linked (GlcNAc...) asparagine glycosylation. 3 disulfides stabilise this stretch: cysteine 4361–cysteine 4398, cysteine 4372–cysteine 4374, and cysteine 4408–cysteine 4413. Asparagine 4412 carries an N-linked (GlcNAc...) asparagine glycan. Positions 4418–4473 constitute a TIL 9 domain; that stretch reads CAPPFEFQACGSPCTGLCATYLSPWLCQDLPPCQPGCYCPEGLLEQAGGCVPPEQC. In terms of domain architecture, TSP type-1 24 spans 4610 to 4661; sequence LCQWGPWGAWSPCQVPCSGGFRLRWREAGIPPGGGCRGPWAQTESCNMGPCP. Cystine bridges form between cysteine 4611-cysteine 4645, cysteine 4622-cysteine 4626, and cysteine 4655-cysteine 4660. A TIL 10 domain is found at 4675–4721; that stretch reads DCANQCPRSCVDLWDRVECLQGPCRPGCRCPPGQLVQDGHCVPVSSC. Asparagine 4729, asparagine 4746, asparagine 4751, and asparagine 4772 each carry an N-linked (GlcNAc...) asparagine glycan. The TSP type-1 25 domain maps to 4761–4814; it reads CPTLGPWSAWSNCSAPCGGGTTKRHRSCKEGPGVTPCQAQDMEQQQDCNLQPCP. 3 cysteine pairs are disulfide-bonded: cysteine 4773/cysteine 4808, cysteine 4777/cysteine 4813, and cysteine 4788/cysteine 4797. The TIL 11 domain occupies 4816–4870; that stretch reads CPPGQVLSACAVSCPRLCSHLQPGTPCMQEPCQLGCDCPRGQLLHNGTCVPPAEC. 4 N-linked (GlcNAc...) asparagine glycosylation sites follow: asparagine 4861, asparagine 4901, asparagine 4947, and asparagine 4954. Residues 4983-5041 enclose the VWFC 3 domain; that stretch reads CECWHHGRPHPPGSEWQKACESCRCVSGESICTQHCPPLTCAQGETAVQEPGGCCPTCR. 4 disulfides stabilise this stretch: cysteine 5052–cysteine 5100, cysteine 5066–cysteine 5117, cysteine 5076–cysteine 5133, and cysteine 5080–cysteine 5135. A CTCK domain is found at 5052–5139; sequence CRHLTELRNL…IHSCQCSACQ (88 aa). N-linked (GlcNAc...) asparagine glycosylation occurs at asparagine 5060.

Belongs to the thrombospondin family. As to expression, subcommissural organ. Located at the boundary of the diencephalon and mesencephalon beneath the posterior commissure at the point where the axons cross the midline.

The protein localises to the secreted. The protein resides in the extracellular space. Functionally, involved in the modulation of neuronal aggregation. May be involved in developmental events during the formation of the central nervous system. In Bos taurus (Bovine), this protein is SCO-spondin (SSPO).